A 59-amino-acid chain; its full sequence is MEKNRTTTFSVYLTIILFLISTFITMVITESNIIRVPEFQCPNGYRKDANGKCREVFHG.

A signal peptide spans 1–27 (MEKNRTTTFSVYLTIILFLISTFITMV). Residues 28 to 31 (ITES) constitute a propeptide that is removed on maturation. At His58 the chain carries Histidine amide.

Expressed by the venom gland.

It localises to the secreted. This is U17-myrmicitoxin-Tb1f from Tetramorium bicarinatum (Tramp ant).